The sequence spans 664 residues: MIGKIINERYKIVDKLGGGGMSTVYLAEDTILNIKVAIKAIFIPPREKEETLKRFEREVHNSSQLSHQNIVSMIDVDEEDDCYYLVMEYIEGPTLSEYIESHGPLSVDTAINFTNQILDGIKHAHDMRIVHRDIKPQNILIDSNKTLKIFDFGIAKALSETSLTQTNHVLGTVQYFSPEQAKGEATDECTDIYSIGIVLYEMLVGEPPFNGETAVSIAIKHIQDSVPNVTTDVRKDIPQSLSNVILRATEKDKANRYKTIQEMKDDLSSVLHENRANEDVYELDKMKTIAVPLKKEDLAKHISEHKSNQPKRETTQVPIVNGPAHHQQFQKPEGTVYEPKPKKKSTRKIVLLSLIFSLLMIALVSFVAMAMFGNKYEETPDVIGKSVKEAEQIFNKNNLKLGKISRSYSDKYPENEIIKTTPNTGERVERGDSVDVVISKGPEKVKMPNVIGLPKEEALQKLKSLGLKDVTIEKVYNNQAPKGYIANQSVTANTEIAIHDSNIKLYESLGIKQVYVEDFEHKSFSKAKKALEEKGFKVESKEEYSDDIDEGDVISQSPKGKSVDEGSTISFVVSKGKKSDSSDVKTTTESVDVPYTGKNDKSQKVKVYIKDKDNDGSTEKGSFDITSDQRIDIPLRIEKGKTASYIVKVDGKTVAEKEVSYDDV.

Topologically, residues 1-348 are cytoplasmic; sequence MIGKIINERY…PKPKKKSTRK (348 aa). One can recognise a Protein kinase domain in the interval 10–271; sequence YKIVDKLGGG…EMKDDLSSVL (262 aa). ATP contacts are provided by residues 16-24 and Lys39; that span reads LGGGGMSTV. The active-site Proton acceptor is Asp133. Thr161, Thr164, and Thr166 each carry phosphothreonine; by autocatalysis. A helical transmembrane segment spans residues 349 to 369; the sequence is IVLLSLIFSLLMIALVSFVAM. The Extracellular portion of the chain corresponds to 370–664; sequence AMFGNKYEET…AEKEVSYDDV (295 aa). PASTA domains are found at residues 373–440, 441–509, and 510–575; these read GNKY…VISK, GPEK…YESL, and GIKQ…VVSK. A disordered region spans residues 541 to 565; that stretch reads KEEYSDDIDEGDVISQSPKGKSVDE. A compositionally biased stretch (polar residues) spans 554-565; the sequence is ISQSPKGKSVDE.

Belongs to the protein kinase superfamily. Ser/Thr protein kinase family. In terms of assembly, homodimer.

The protein localises to the spore membrane. It catalyses the reaction L-seryl-[protein] + ATP = O-phospho-L-seryl-[protein] + ADP + H(+). It carries out the reaction L-threonyl-[protein] + ATP = O-phospho-L-threonyl-[protein] + ADP + H(+). Probable protein kinase that is responsible for triggering spore germination in response to muropeptides, signaling bacteria to exit dormancy. PrkC is thus a germination receptor that binds peptidoglycan fragments containing either m-Dpm (meso-diaminopimelate) or L-lys, which act as spore germinants. Probably autophosphorylates and phosphorylates FusA (EF-G, elongation factor G); the latter modification is likely necessary for germination in response to peptidoglycan. The polypeptide is Serine/threonine-protein kinase PrkC (prkC) (Staphylococcus aureus (strain Newman)).